We begin with the raw amino-acid sequence, 313 residues long: MKTLLLLIPLVLTACGTLTGIPAHGGGKRFAVEQELVAASSRAAVKEMDLSALKGRKAALYVSVMGDQGSGNISGGRYSIDALIRGGYHNNPESATQYSYPAYDTTATTKADALSSVTTSTSLLNAPAAALTRNSGRKGERSAGLSVNGTGDYRNETLLANPRDVSFLTNLIQTVFYLRGIEVVPPEYADTDVFVTVDVFGTVRSRTELHLYNAETLKAQTKLEYFAVDRDSRKLLIAPETAAYESQYQEQYALWMGPYSVGKTVKASDRLMVDFSDITPYGDTTAQNRPDFKQNNGKKPDVGNEVIRRRKGG.

The signal sequence occupies residues 1 to 14 (MKTLLLLIPLVLTA). Cys15 is lipidated: N-palmitoyl cysteine. Residue Cys15 is the site of S-diacylglycerol cysteine attachment. Residues 282 to 297 (GDTTAQNRPDFKQNNG) show a composition bias toward polar residues. The disordered stretch occupies residues 282-313 (GDTTAQNRPDFKQNNGKKPDVGNEVIRRRKGG).

Belongs to the MafA family.

It is found in the cell outer membrane. This chain is Adhesin MafA 2 (mafA2), found in Neisseria meningitidis serogroup C / serotype 2a (strain ATCC 700532 / DSM 15464 / FAM18).